The sequence spans 391 residues: GDSL esterase/lipase 22 (391 aa).

The first 29 residues, Met1–Gly29, serve as a signal peptide directing secretion. Catalysis depends on Ser43, which acts as the Nucleophile. N-linked (GlcNAc...) asparagine glycans are attached at residues Asn105, Asn165, and Asn288. Active-site residues include Asp322 and His325. Residues Pro372–Tyr391 are disordered.

Belongs to the 'GDSL' lipolytic enzyme family. Component of the PYK10 complex, at least composed of PYK10/BGLU23, BGLU21, BGLU22, JAL22, JAL23, PBP1/JAL30, PBP2/JAL31, JAL32, JAL33, JAL34, JAL35, GLL22 and GLL23.

The protein localises to the secreted. In Arabidopsis thaliana (Mouse-ear cress), this protein is GDSL esterase/lipase 22 (GLL22).